Consider the following 971-residue polypeptide: MTEPGRYKKTVNLPKTKFDMRANAVKREPELQKFWADHQIYENLSQNNPGDVFVLHDGPPYANGDLHIGHALNKILKDTINKFQLLQGRKVRYVPGWDCHGLPIELKVLQNIQPENRAKLTPLKLRWKARDFALKTVEKQSKSFQRYGVWGNWENPYLTLKPEYEAAQIGVFGKMALKGYIYRGFKPVYWSPSSQTALAEAELEYPEGHTSRSIYVTFKVTGLSETAQPLLDEYLPTLKVAIWTTTPWTIPGNLAVSLNPDLTYAVVKAGEDYLIVAEDLVETLTETLESSFKVIKTLPGKALENSTYQHPLFEREGPLVLGDYVTTESGTGLVHTAPGHGQEDYQVGQQYGLAMLSPVDGDGTFTDEAGPFAGLNVLNGGNEAVIEALQSAGALLKEESYAHKYPYDWRTKKPVILRATEQWFASVDGFREAVLDAIATVNWIPAQGENRITSMVSERSDWCISRQRNWGVPIPVFYNDATGEPLLNEATVNHIQGIVAEKGSDAWWELDNDELLPEPYRSDGNTYRKGTDTMDVWFDSGSSWAAVCDQREPLKYPAEMYLEGSDQHRGWFQSSILTSVATNGHAPYKTVLTHGFVLDEQGRKMSKSIGNVVDPAIVIAGGKNQKQDPPYGADVLRLWVSSVDYASDVPLGKNILKQMADVYRKIRNTSRFLLGNLHDFDPAQDAVAYEDLPQLDRYMLHRITEVFTDVTEAFESFQFFRFFQTVQNFCVVDLSNFYLDIAKDRLYISEPNAQRRRSCQTVLAIALENLARAIAPVLSHMAEDIWQSLPYETEHQSVFASGWMRLEDQWHNPDLASHWIVLREIRQEVNKVLEQARTEKEIGSSLEAKVLLYVSDTDLRQQLDAMNPSTGGGSNNVDELRYLFLASQVELLETPKNLDRLMYQFQSETLGVGVVTADGKKCDRCWNYSTYVGRSKQHPLLCDRCEPIIENLVTQGQISLTEEGRYQPNTK.

The short motif at 60–70 (PYANGDLHIGH) is the 'HIGH' region element. Glutamate 563 contacts L-isoleucyl-5'-AMP. The short motif at 604 to 608 (KMSKS) is the 'KMSKS' region element. An ATP-binding site is contributed by lysine 607. 4 residues coordinate Zn(2+): cysteine 922, cysteine 925, cysteine 942, and cysteine 945.

Belongs to the class-I aminoacyl-tRNA synthetase family. IleS type 1 subfamily. In terms of assembly, monomer. Requires Zn(2+) as cofactor.

It is found in the cytoplasm. The catalysed reaction is tRNA(Ile) + L-isoleucine + ATP = L-isoleucyl-tRNA(Ile) + AMP + diphosphate. Its function is as follows. Catalyzes the attachment of isoleucine to tRNA(Ile). As IleRS can inadvertently accommodate and process structurally similar amino acids such as valine, to avoid such errors it has two additional distinct tRNA(Ile)-dependent editing activities. One activity is designated as 'pretransfer' editing and involves the hydrolysis of activated Val-AMP. The other activity is designated 'posttransfer' editing and involves deacylation of mischarged Val-tRNA(Ile). The chain is Isoleucine--tRNA ligase from Acaryochloris marina (strain MBIC 11017).